The following is a 727-amino-acid chain: Long-chain-fatty-acid--[acyl-carrier-protein] ligase AEE15, chloroplastic (727 aa).

The transit peptide at 1 to 66 (MQIRLKPDYS…PSFRRFRVHC (66 aa)) directs the protein to the chloroplast.

The protein belongs to the ATP-dependent AMP-binding enzyme family.

It localises to the plastid. The protein localises to the chloroplast. It carries out the reaction a long-chain fatty acid + holo-[ACP] + ATP = a long-chain fatty acyl-[ACP] + AMP + diphosphate. Probably involved in the activation of fatty acids to acyl-carrier-protein prior to fatty acid elongation in plastids. Acts on medium- to long-chain fatty acids. The protein is Long-chain-fatty-acid--[acyl-carrier-protein] ligase AEE15, chloroplastic (AAE15) of Arabidopsis thaliana (Mouse-ear cress).